The primary structure comprises 299 residues: Palmitoyltransferase ZDHHC3 (299 aa).

Residues 1-47 (MMLIPTHHFRDIERKPEYLQPEKCAPPPFPGPVGTMWFIRDGCGIAC) lie on the Cytoplasmic side of the membrane. At Y18 the chain carries Phosphotyrosine. Residues 48-68 (AIVTWFLVLYAEFVVLFVMLI) traverse the membrane as a helical segment. The Lumenal portion of the chain corresponds to 69–72 (PSRD). The chain crosses the membrane as a helical span at residues 73–93 (YAYSIINGIVFNLLAFLALAS). At 94 to 171 (HCRAMLTDPG…NCVGENNQKY (78 aa)) the chain is on the cytoplasmic side. The DHHC domain occupies 128–254 (KCPKCCSIKP…DETGIEQLKK (127 aa)). C146 carries the S-palmitoyl cysteine lipid modification. C157 functions as the S-palmitoyl cysteine intermediate in the catalytic mechanism. The helical transmembrane segment at 172 to 192 (FVLFTMYIALISLHALIMVGF) threads the bilayer. Over 193-214 (HFLHCFEEDWTKCSSFSPPTTV) the chain is Lumenal. A helical membrane pass occupies residues 215–235 (ILLILLCFEALLFLIFTSVMF). The Cytoplasmic portion of the chain corresponds to 236-299 (GTQVHSICTD…GKADPYQYVV (64 aa)).

It belongs to the DHHC palmitoyltransferase family. In terms of assembly, monomer. Homooligomers. The monomeric form has a higher catalytic activity. Forms heterooligomers with ZDHHC7. Interacts with TNFRSF10A. In terms of processing, phosphorylation by FGFR1 and SRC probably regulates the palmitoyltransferase activity. Post-translationally, autopalmitoylated.

The protein resides in the golgi apparatus membrane. It carries out the reaction L-cysteinyl-[protein] + hexadecanoyl-CoA = S-hexadecanoyl-L-cysteinyl-[protein] + CoA. The catalysed reaction is L-cysteinyl-[protein] + tetradecanoyl-CoA = S-tetradecanoyl-L-cysteinyl-[protein] + CoA. The enzyme catalyses L-cysteinyl-[protein] + octadecanoyl-CoA = S-octadecanoyl-L-cysteinyl-[protein] + CoA. Its function is as follows. Golgi-localized palmitoyltransferase that catalyzes the addition of palmitate onto various protein substrates. Has no stringent fatty acid selectivity and in addition to palmitate can also transfer onto target proteins myristate from tetradecanoyl-CoA and stearate from octadecanoyl-CoA. Plays an important role in G protein-coupled receptor signaling pathways involving GNAQ and potentially other heterotrimeric G proteins by regulating their dynamic association with the plasma membrane. Palmitoylates ITGA6 and ITGB4, thereby regulating the alpha-6/beta-4 integrin localization, expression and function in cell adhesion to laminin. Plays a role in the TRAIL-activated apoptotic signaling pathway most probably through the palmitoylation and localization to the plasma membrane of TNFRSF10A. In the brain, by palmitoylating the gamma subunit GABRG2 of GABA(A) receptors and regulating their postsynaptic accumulation, plays a role in synaptic GABAergic inhibitory function and GABAergic innervation. Palmitoylates the neuronal protein GAP43 which is also involved in the formation of GABAergic synapses. Palmitoylates NCDN thereby regulating its association with endosome membranes. Probably palmitoylates PRCD and is involved in its proper localization within the photoreceptor. Could mediate the palmitoylation of NCAM1 and regulate neurite outgrowth. Could palmitoylate DNAJC5 and regulate its localization to Golgi membranes. Also constitutively palmitoylates DLG4. May also palmitoylate SNAP25. Could palmitoylate the glutamate receptors GRIA1 and GRIA2 but this has not been confirmed in vivo. Could also palmitoylate the D(2) dopamine receptor DRD2. May also palmitoylate LAMTOR1, promoting its localization to lysosomal membranes. Palmitoylates the Toll-like receptor 9/TLR9 in the Golgi and thereby regulates TLR9 trafficking to endosomes. May palmitoylate CALHM1 and CALHM3 subunits of gustatory voltage-gated ion channels and modulate channel gating and kinetics. The chain is Palmitoyltransferase ZDHHC3 from Rattus norvegicus (Rat).